Consider the following 391-residue polypeptide: Secreted aspartic protease 1 (391 aa).

An N-terminal signal peptide occupies residues 1 to 18 (MFLKNIFIALAIALLVDA). The propeptide at 19-50 (SPAKRSPGFVTLDFDVIKTPVNATGQEGKVKR) is activation peptide. N40 carries an N-linked (GlcNAc...) asparagine glycan. In terms of domain architecture, Peptidase A1 spans 64–377 (YAADITIGSN…DLDDDKISLA (314 aa)). D82 is a catalytic residue. 82–84 (DTG) is a binding site for pepstatin A. Residues C97 and C109 are joined by a disulfide bond. Position 135 to 136 (135 to 136 (GD)) interacts with pepstatin A. Positions 241 and 263 each coordinate Zn(2+). The active site involves D267. A pepstatin A-binding site is contributed by 267–271 (DSGTT). Cysteines 305 and 343 form a disulfide.

The protein belongs to the peptidase A1 family. In terms of assembly, monomer.

The protein localises to the secreted. The catalysed reaction is Preferential cleavage at the carboxyl of hydrophobic amino acids, but fails to cleave 15-Leu-|-Tyr-16, 16-Tyr-|-Leu-17 and 24-Phe-|-Phe-25 of insulin B chain. Activates trypsinogen, and degrades keratin.. Its activity is regulated as follows. Inhibited by pepstatin A analogs and squash aspartic peptidase inhibitor (SQAPI). Secreted aspartic peptidases (SAPs) are a group of ten acidic hydrolases considered as key virulence factors. These enzymes supply the fungus with nutrient amino acids as well as are able to degrade the selected host's proteins involved in the immune defense. Induces host inflammatory cytokine production in a proteolytic activity-independent way. Plays a role in tissue damage during superficial infection. Moreover, acts toward human hemoglobin though limited proteolysis to generate a variety of antimicrobial hemocidins, enabling to compete with the other microorganisms of the same physiological niche using the microbicidal peptides generated from the host protein. In terms of biological role, plays a key role in defense against host by cleaving histatin-5 (Hst 5), a peptide from human saliva that carries out fungicidal activity. The cleavage rate decreases in an order of SAP2 &gt; SAP9 &gt; SAP3 &gt; SAP7 &gt; SAP4 &gt; SAP1 &gt; SAP8. The first cleavage occurs between residues 'Lys-17' and 'His-18' of Hst 5, giving DSHAKRHHGYKRKFHEK and HHSHRGY peptides. Further fragmentation by SAP1 results in AKRHHGYKRKFHEK and AKRHHGY products. The chain is Secreted aspartic protease 1 from Candida albicans (strain SC5314 / ATCC MYA-2876) (Yeast).